The following is a 336-amino-acid chain: Ketol-acid reductoisomerase (NADP(+)) (336 aa).

The KARI N-terminal Rossmann domain occupies S5–T185. NADP(+)-binding positions include Y28 to Q31, S56, and D86 to Q89. The active site involves H111. G137 provides a ligand contact to NADP(+). The KARI C-terminal knotted domain maps to T186 to G331. Mg(2+) is bound by residues D194, E198, E230, and E234. S255 contacts substrate.

The protein belongs to the ketol-acid reductoisomerase family. The cofactor is Mg(2+).

It catalyses the reaction (2R)-2,3-dihydroxy-3-methylbutanoate + NADP(+) = (2S)-2-acetolactate + NADPH + H(+). The catalysed reaction is (2R,3R)-2,3-dihydroxy-3-methylpentanoate + NADP(+) = (S)-2-ethyl-2-hydroxy-3-oxobutanoate + NADPH + H(+). The protein operates within amino-acid biosynthesis; L-isoleucine biosynthesis; L-isoleucine from 2-oxobutanoate: step 2/4. It functions in the pathway amino-acid biosynthesis; L-valine biosynthesis; L-valine from pyruvate: step 2/4. Functionally, involved in the biosynthesis of branched-chain amino acids (BCAA). Catalyzes an alkyl-migration followed by a ketol-acid reduction of (S)-2-acetolactate (S2AL) to yield (R)-2,3-dihydroxy-isovalerate. In the isomerase reaction, S2AL is rearranged via a Mg-dependent methyl migration to produce 3-hydroxy-3-methyl-2-ketobutyrate (HMKB). In the reductase reaction, this 2-ketoacid undergoes a metal-dependent reduction by NADPH to yield (R)-2,3-dihydroxy-isovalerate. The protein is Ketol-acid reductoisomerase (NADP(+)) of Saccharolobus islandicus (strain Y.N.15.51 / Yellowstone #2) (Sulfolobus islandicus).